The sequence spans 23 residues: Cytochrome c oxidase subunit 7A-liver, mitochondrial (23 aa).

Belongs to the cytochrome c oxidase VIIa family. As to quaternary structure, component of the cytochrome c oxidase (complex IV, CIV), a multisubunit enzyme composed of 14 subunits. The complex is composed of a catalytic core of 3 subunits MT-CO1, MT-CO2 and MT-CO3, encoded in the mitochondrial DNA, and 11 supernumerary subunits COX4I, COX5A, COX5B, COX6A, COX6B, COX6C, COX7A, COX7B, COX7C, COX8 and NDUFA4, which are encoded in the nuclear genome. The complex exists as a monomer or a dimer and forms supercomplexes (SCs) in the inner mitochondrial membrane with NADH-ubiquinone oxidoreductase (complex I, CI) and ubiquinol-cytochrome c oxidoreductase (cytochrome b-c1 complex, complex III, CIII), resulting in different assemblies (supercomplex SCI(1)III(2)IV(1) and megacomplex MCI(2)III(2)IV(2)).

The protein localises to the mitochondrion inner membrane. The protein operates within energy metabolism; oxidative phosphorylation. Component of the cytochrome c oxidase, the last enzyme in the mitochondrial electron transport chain which drives oxidative phosphorylation. The respiratory chain contains 3 multisubunit complexes succinate dehydrogenase (complex II, CII), ubiquinol-cytochrome c oxidoreductase (cytochrome b-c1 complex, complex III, CIII) and cytochrome c oxidase (complex IV, CIV), that cooperate to transfer electrons derived from NADH and succinate to molecular oxygen, creating an electrochemical gradient over the inner membrane that drives transmembrane transport and the ATP synthase. Cytochrome c oxidase is the component of the respiratory chain that catalyzes the reduction of oxygen to water. Electrons originating from reduced cytochrome c in the intermembrane space (IMS) are transferred via the dinuclear copper A center (CU(A)) of subunit 2 and heme A of subunit 1 to the active site in subunit 1, a binuclear center (BNC) formed by heme A3 and copper B (CU(B)). The BNC reduces molecular oxygen to 2 water molecules using 4 electrons from cytochrome c in the IMS and 4 protons from the mitochondrial matrix. The chain is Cytochrome c oxidase subunit 7A-liver, mitochondrial from Oncorhynchus mykiss (Rainbow trout).